Reading from the N-terminus, the 734-residue chain is Photosystem I P700 chlorophyll a apoprotein A2 (734 aa).

8 consecutive transmembrane segments (helical) span residues 46–69 (IFAS…FHVA), 135–158 (LYTG…LHLQ), 175–199 (LNHH…HVAI), 273–291 (MAHH…GHMY), 330–353 (IHFQ…QHMY), 369–395 (AALY…IFFI), 417–439 (AIKS…LYVH), and 517–535 (FLVH…LILV). 2 residues coordinate [4Fe-4S] cluster: Cys-559 and Cys-568. Transmembrane regions (helical) follow at residues 575–596 (AFYL…YWHW) and 643–665 (LSVW…MFLI). His-654, Met-662, and Tyr-670 together coordinate chlorophyll a. Trp-671 is a phylloquinone binding site. A helical transmembrane segment spans residues 707 to 727 (LVGLAHFSVGYIFTYAAFLIA).

This sequence belongs to the PsaA/PsaB family. In terms of assembly, the PsaA/B heterodimer binds the P700 chlorophyll special pair and subsequent electron acceptors. PSI consists of a core antenna complex that captures photons, and an electron transfer chain that converts photonic excitation into a charge separation. The eukaryotic PSI reaction center is composed of at least 11 subunits. P700 is a chlorophyll a/chlorophyll a' dimer, A0 is one or more chlorophyll a, A1 is one or both phylloquinones and FX is a shared 4Fe-4S iron-sulfur center. serves as cofactor.

It localises to the plastid. Its subcellular location is the chloroplast thylakoid membrane. The catalysed reaction is reduced [plastocyanin] + hnu + oxidized [2Fe-2S]-[ferredoxin] = oxidized [plastocyanin] + reduced [2Fe-2S]-[ferredoxin]. PsaA and PsaB bind P700, the primary electron donor of photosystem I (PSI), as well as the electron acceptors A0, A1 and FX. PSI is a plastocyanin-ferredoxin oxidoreductase, converting photonic excitation into a charge separation, which transfers an electron from the donor P700 chlorophyll pair to the spectroscopically characterized acceptors A0, A1, FX, FA and FB in turn. Oxidized P700 is reduced on the lumenal side of the thylakoid membrane by plastocyanin. In Chloranthus spicatus (Chulantree), this protein is Photosystem I P700 chlorophyll a apoprotein A2.